The sequence spans 215 residues: MNIFRFAGDMSHLISVLILLLKIYATKSCAGISLKTQELYALVFLTRYLDLFTDYVSLYNSIMKIVFIASSLAIVWCMRRHPLVRRSYDKDLDTFRHQYVVLACFVLGLILNEKFTVQEVFWAFSIYLEAVAILPQLVLLQRSGNVDNLTGQYVVFLGAYRGLYIINWIYRYFTEDHFTRWIACVSGLVQTALYADFFYYYYISWKTNTKLKLPA.

The Lumenal segment spans residues 1 to 2; that stretch reads MN. The helical transmembrane segment at 3-21 threads the bilayer; the sequence is IFRFAGDMSHLISVLILLL. At 22-35 the chain is on the cytoplasmic side; that stretch reads KIYATKSCAGISLK. A helical membrane pass occupies residues 36-53; the sequence is TQELYALVFLTRYLDLFT. Over 54-61 the chain is Lumenal; sequence DYVSLYNS. A helical membrane pass occupies residues 62-82; it reads IMKIVFIASSLAIVWCMRRHP. Over 83–98 the chain is Cytoplasmic; sequence LVRRSYDKDLDTFRHQ. Residues 99–112 form a helical membrane-spanning segment; sequence YVVLACFVLGLILN. At 113–119 the chain is on the lumenal side; it reads EKFTVQE. The helical transmembrane segment at 120 to 139 threads the bilayer; sequence VFWAFSIYLEAVAILPQLVL. Residues 140–151 are Cytoplasmic-facing; that stretch reads LQRSGNVDNLTG. The chain crosses the membrane as a helical span at residues 152 to 170; that stretch reads QYVVFLGAYRGLYIINWIY. Residues 171–181 are Lumenal-facing; sequence RYFTEDHFTRW. A helical transmembrane segment spans residues 182–202; that stretch reads IACVSGLVQTALYADFFYYYY. Residues 203-215 lie on the Cytoplasmic side of the membrane; sequence ISWKTNTKLKLPA.

It belongs to the ERD2 family.

It localises to the endoplasmic reticulum membrane. Its function is as follows. Required for the retention of luminal endoplasmic reticulum proteins. Determines the specificity of the luminal ER protein retention system. Also required for normal vesicular traffic through the Golgi. This receptor recognizes H-D-E-L. The sequence is that of ER lumen protein-retaining receptor A (ERD2A) from Arabidopsis thaliana (Mouse-ear cress).